Consider the following 141-residue polypeptide: Hemoglobin subunit alpha-2 (141 aa).

Residues 1 to 141 enclose the Globin domain; it reads VLSSQDKANV…VKHVLTSKYR (141 aa). Histidine 58 provides a ligand contact to O2. Heme b is bound at residue histidine 87.

This sequence belongs to the globin family. As to quaternary structure, minor hemoglobin is a heterotetramer of two alpha-2 chains and two beta-2 chains. As to expression, red blood cells.

Its function is as follows. Involved in oxygen transport from the lung to the various peripheral tissues. The chain is Hemoglobin subunit alpha-2 from Triturus cristatus (Great crested newt).